The chain runs to 815 residues: Lon protease 1 (815 aa).

Residues 12 to 205 (VFVLALRDVV…HILKTIETEI (194 aa)) enclose the Lon N-terminal domain. ATP is bound at residue 358–365 (GPPGVGKT). The Lon proteolytic domain occupies 594-775 (TNQIGQVAGL…DEVFKIALES (182 aa)). Catalysis depends on residues S681 and K724.

This sequence belongs to the peptidase S16 family. In terms of assembly, homohexamer. Organized in a ring with a central cavity.

It is found in the cytoplasm. It carries out the reaction Hydrolysis of proteins in presence of ATP.. In terms of biological role, ATP-dependent serine protease that mediates the selective degradation of mutant and abnormal proteins as well as certain short-lived regulatory proteins. Required for cellular homeostasis and for survival from DNA damage and developmental changes induced by stress. Degrades polypeptides processively to yield small peptide fragments that are 5 to 10 amino acids long. Binds to DNA in a double-stranded, site-specific manner. This is Lon protease 1 from Hydrogenovibrio crunogenus (strain DSM 25203 / XCL-2) (Thiomicrospira crunogena).